Here is a 367-residue protein sequence, read N- to C-terminus: THO complex subunit 6 (367 aa).

7 WD repeats span residues 23–67, 88–129, 157–196, 199–240, 243–283, 285–322, and 324–363; these read IETR…SQSA, AHEG…ESDV, SPMPEINAMSVDPQSGSVFTAAGDSCAYCWDVESGKIKMT, GHSD…KVIG, DKKS…CVQT, PIPAHVQDVMFDEKQILTVGAEPLLRRFDLNGALLSQI, and CAPCSVFSISLHPAGVVAVGGYGGIVDVISQFGSHLCTFR.

It belongs to the WD repeat THOC6 family. In terms of assembly, component of the THO complex, which is composed of THO1, THO2, THO3, THO5, THO6 and THO7. Interacts with ABI5, DDB1A and DWA2.

Its subcellular location is the nucleus. Its pathway is protein modification; protein ubiquitination. Its function is as follows. Acts as a component of the THO subcomplex of the TREX complex which is thought to couple mRNA transcription, processing and nuclear export. In terms of biological role, component of the CUL4-RBX1-DDB1-DWA1/DWA2 E3 ubiquitin-protein ligase complex that acts as a negative regulator in abscisic acid (ABA) signaling. May function as the substrate recognition module within this complex leading to ABI5 degradation. Functionally redundant with DWA2. The protein is THO complex subunit 6 (THO6) of Arabidopsis thaliana (Mouse-ear cress).